The primary structure comprises 271 residues: MSRVGLLVLGPAGAGKSTFCNSIISHMQTIGRRAHIVNLDPAAEPSKYEFTIDIRDLISLDDVMEELDLGPNGALIYCFEYLMKNLDWLDEEIGDYNDEYLIFDCPGQIELYTHIPVLPNIVRHLQGQLNFNLCATYLLEAPFVIDSSKFFSGALSAMSAMILLELPHINVLSKLDMIKDEYGKKKLKRFLNPDAMLLANEADQNLNPKFHHLNQCIANLVDDFGMVQFLPLEANNPESVATILSYVDDVTQWAEAQEQKEPKDQIDIEDL.

13 to 18 (GAGKST) contributes to the GTP binding site. A Gly-Pro-Asn (GPN)-loop; involved in dimer interface motif is present at residues 70 to 72 (GPN). 173–176 (SKLD) serves as a coordination point for GTP.

Belongs to the GPN-loop GTPase family. In terms of assembly, heterodimers with GPN1 or GPN2. Binds to RNA polymerase II (RNAPII).

Functionally, small GTPase required for proper nuclear import of RNA polymerase II and III (RNAPII and RNAPIII). May act at an RNAP assembly step prior to nuclear import. This Candida glabrata (strain ATCC 2001 / BCRC 20586 / JCM 3761 / NBRC 0622 / NRRL Y-65 / CBS 138) (Yeast) protein is GPN-loop GTPase 3.